A 218-amino-acid polypeptide reads, in one-letter code: Alkylmercury lyase (218 aa).

Belongs to the MerB family.

The catalysed reaction is an alkylmercury + H(+) = an alkane + Hg(2+). Its function is as follows. Cleaves the carbon-mercury bond of organomercurials such as phenylmercuric acetate. One product is Hg(2+), which is subsequently detoxified by the mercuric reductase. This Bacillus cereus protein is Alkylmercury lyase (merB1).